Here is a 180-residue protein sequence, read N- to C-terminus: Oligoribonuclease (180 aa).

Positions 7 to 170 constitute an Exonuclease domain; sequence LIWIDLEMTG…DDIRESIAEL (164 aa). The active site involves Tyr-128.

Belongs to the oligoribonuclease family.

It is found in the cytoplasm. Its function is as follows. 3'-to-5' exoribonuclease specific for small oligoribonucleotides. The chain is Oligoribonuclease from Pseudomonas fluorescens (strain Pf0-1).